A 347-amino-acid chain; its full sequence is Probable nitronate monooxygenase (347 aa).

FMN contacts are provided by residues Asn69, Gln171, Gly176, Gly213, and 232–235 (QIGS).

Belongs to the nitronate monooxygenase family. NMO class I subfamily. FMN is required as a cofactor.

The catalysed reaction is 3 propionate 3-nitronate + 3 O2 + H2O = 3 3-oxopropanoate + 2 nitrate + nitrite + H2O2 + 3 H(+). Functionally, nitronate monooxygenase that uses molecular oxygen to catalyze the oxidative denitrification of alkyl nitronates. Acts on propionate 3-nitronate (P3N), the presumed physiological substrate. Probably functions in the detoxification of P3N, a metabolic poison produced by plants and fungi as a defense mechanism. The polypeptide is Probable nitronate monooxygenase (yrpB) (Bacillus subtilis (strain 168)).